Here is a 597-residue protein sequence, read N- to C-terminus: Elongation factor 4 (597 aa).

Residues 2–184 (KNIRNFSIIA…EIVAKIPAPT (183 aa)) enclose the tr-type G domain. Residues 14–19 (DHGKST) and 131–134 (NKID) contribute to the GTP site.

This sequence belongs to the TRAFAC class translation factor GTPase superfamily. Classic translation factor GTPase family. LepA subfamily.

Its subcellular location is the cell inner membrane. The enzyme catalyses GTP + H2O = GDP + phosphate + H(+). Its function is as follows. Required for accurate and efficient protein synthesis under certain stress conditions. May act as a fidelity factor of the translation reaction, by catalyzing a one-codon backward translocation of tRNAs on improperly translocated ribosomes. Back-translocation proceeds from a post-translocation (POST) complex to a pre-translocation (PRE) complex, thus giving elongation factor G a second chance to translocate the tRNAs correctly. Binds to ribosomes in a GTP-dependent manner. In Neisseria meningitidis serogroup C / serotype 2a (strain ATCC 700532 / DSM 15464 / FAM18), this protein is Elongation factor 4.